The following is a 149-amino-acid chain: NADH-quinone oxidoreductase subunit A (149 aa).

A run of 3 helical transmembrane segments spans residues 16–36 (FGIFLIVAIGLCCLMLVGAWF), 68–88 (FYLVAMFFVIFDVEALYLFAW), and 98–118 (LGFIEAAIFILVLLAGLVYLV).

This sequence belongs to the complex I subunit 3 family. NDH-1 is composed of 13 different subunits. Subunits NuoA, H, J, K, L, M, N constitute the membrane sector of the complex.

The protein resides in the cell inner membrane. The catalysed reaction is a quinone + NADH + 5 H(+)(in) = a quinol + NAD(+) + 4 H(+)(out). Functionally, NDH-1 shuttles electrons from NADH, via FMN and iron-sulfur (Fe-S) centers, to quinones in the respiratory chain. The immediate electron acceptor for the enzyme in this species is believed to be ubiquinone. Couples the redox reaction to proton translocation (for every two electrons transferred, four hydrogen ions are translocated across the cytoplasmic membrane), and thus conserves the redox energy in a proton gradient. The protein is NADH-quinone oxidoreductase subunit A of Cronobacter sakazakii (strain ATCC BAA-894) (Enterobacter sakazakii).